The chain runs to 37 residues: Large ribosomal subunit protein bL36 (37 aa).

It belongs to the bacterial ribosomal protein bL36 family.

The polypeptide is Large ribosomal subunit protein bL36 (Nitratidesulfovibrio vulgaris (strain DSM 19637 / Miyazaki F) (Desulfovibrio vulgaris)).